Consider the following 270-residue polypeptide: Eukaryotic translation initiation factor 3 subunit G-1 (270 aa).

Positions 189–267 constitute an RRM domain; sequence AAIRISNLSE…LILSVEWSKP (79 aa).

Belongs to the eIF-3 subunit G family. As to quaternary structure, component of the eukaryotic translation initiation factor 3 (eIF-3) complex. The eIF-3 complex interacts with pix.

It localises to the cytoplasm. RNA-binding component of the eukaryotic translation initiation factor 3 (eIF-3) complex, which is involved in protein synthesis of a specialized repertoire of mRNAs and, together with other initiation factors, stimulates binding of mRNA and methionyl-tRNAi to the 40S ribosome. The eIF-3 complex specifically targets and initiates translation of a subset of mRNAs involved in cell proliferation. This subunit can bind 18S rRNA. The protein is Eukaryotic translation initiation factor 3 subunit G-1 of Drosophila ananassae (Fruit fly).